The chain runs to 68 residues: DNA-directed RNA polymerase subunit Rpo10 (68 aa).

Residues Cys7, Cys10, Cys44, and Cys45 each coordinate Zn(2+).

Belongs to the archaeal Rpo10/eukaryotic RPB10 RNA polymerase subunit family. Part of the RNA polymerase complex. It depends on Zn(2+) as a cofactor.

The protein resides in the cytoplasm. It carries out the reaction RNA(n) + a ribonucleoside 5'-triphosphate = RNA(n+1) + diphosphate. In terms of biological role, DNA-dependent RNA polymerase (RNAP) catalyzes the transcription of DNA into RNA using the four ribonucleoside triphosphates as substrates. In Methanococcus maripaludis (strain DSM 14266 / JCM 13030 / NBRC 101832 / S2 / LL), this protein is DNA-directed RNA polymerase subunit Rpo10.